The following is a 396-amino-acid chain: Inositol hexakisphosphate kinase 3 (396 aa).

Residue 206–214 participates in substrate binding; the sequence is PCILDLKMG.

The protein belongs to the inositol phosphokinase (IPK) family. As to expression, highly expressed in cerebellum, brain cortex, kidney, thymus and lung. Detected at lower levels in hippocampus, testis, heart and olfactory bulb.

The protein resides in the cytoplasm. The catalysed reaction is 1D-myo-inositol hexakisphosphate + ATP = 5-diphospho-1D-myo-inositol 1,2,3,4,6-pentakisphosphate + ADP. It catalyses the reaction 1-diphospho-1D-myo-inositol 2,3,4,5,6-pentakisphosphate + ATP + H(+) = 1,5-bis(diphospho)-1D-myo-inositol 2,3,4,6-tetrakisphosphate + ADP. Functionally, converts inositol hexakisphosphate (InsP6) to diphosphoinositol pentakisphosphate (InsP7/PP-InsP5). Converts 1,3,4,5,6-pentakisphosphate (InsP5) to PP-InsP4. This Mus musculus (Mouse) protein is Inositol hexakisphosphate kinase 3 (Ip6k3).